We begin with the raw amino-acid sequence, 637 residues long: Early transcription factor 70 kDa subunit (637 aa).

The Helicase ATP-binding domain maps to 32–185 (RTIIDENRSV…GHIIDLMSEE (154 aa)). 45-52 (HIMGSGKT) lines the ATP pocket. The DEXH box signature appears at 135–138 (DKAH). One can recognise a Helicase C-terminal domain in the interval 327 to 507 (KFKYFINRIQ…VLPFDIKKLL (181 aa)).

The protein belongs to the helicase family. VETF subfamily. In terms of assembly, heterodimer of a 70 kDa and a 82 kDa subunit. Part of the early transcription complex composed of ETF, RAP94/OPG109, and the DNA-directed RNA polymerase.

The protein localises to the virion. In terms of biological role, acts with RNA polymerase to initiate transcription from early gene promoters. Is recruited by the RPO-associated protein of 94 kDa RAP94/OPG109 to form the early transcription complex, which also contains the core RNA polymerase. ETF heterodimer binds to early gene promoters. The protein is Early transcription factor 70 kDa subunit (OPG118) of Homo sapiens (Human).